The primary structure comprises 228 residues: Type II methyltransferase M.HhaII (228 aa).

The protein belongs to the N(4)/N(6)-methyltransferase family.

It catalyses the reaction a 2'-deoxyadenosine in DNA + S-adenosyl-L-methionine = an N(6)-methyl-2'-deoxyadenosine in DNA + S-adenosyl-L-homocysteine + H(+). A beta subtype methylase, recognizes the double-stranded sequence 5'-GANTC-3', methylates A-2 on both strands, and protects the DNA from cleavage by the HhaII endonuclease. The polypeptide is Type II methyltransferase M.HhaII (Haemophilus parahaemolyticus).